The sequence spans 402 residues: Acetylornithine aminotransferase (402 aa).

Pyridoxal 5'-phosphate contacts are provided by residues 106 to 107 (GA) and F132. R135 is a N(2)-acetyl-L-ornithine binding site. Position 217–220 (217–220 (DEVQ)) interacts with pyridoxal 5'-phosphate. An N6-(pyridoxal phosphate)lysine modification is found at K247. Residue T275 participates in N(2)-acetyl-L-ornithine binding. T276 contributes to the pyridoxal 5'-phosphate binding site.

This sequence belongs to the class-III pyridoxal-phosphate-dependent aminotransferase family. ArgD subfamily. Homodimer. Pyridoxal 5'-phosphate serves as cofactor.

The protein localises to the cytoplasm. The catalysed reaction is N(2)-acetyl-L-ornithine + 2-oxoglutarate = N-acetyl-L-glutamate 5-semialdehyde + L-glutamate. Its pathway is amino-acid biosynthesis; L-arginine biosynthesis; N(2)-acetyl-L-ornithine from L-glutamate: step 4/4. The chain is Acetylornithine aminotransferase from Streptomyces coelicolor (strain ATCC BAA-471 / A3(2) / M145).